A 743-amino-acid polypeptide reads, in one-letter code: MNNPSETSKPSMESGDGNTGTQTNGLDFQKQPVPVGGAISTAQAQAFLGHLHQVQLAGTSLQAAAQSLNVQSKSNEESGDSQQPSQPSQQPSVQAAIPQTQLMLAGGQITGLTLTPAQQQLLLQQAQAQAQLLAAAVQQHSASQQHSAAGATISASAATPMTQIPLSQPIQIAQDLQQLQQLQQQNLNLQQFVLVHPTTNLQPAQFIISQTPQGQQGLLQAQNLLTQLPQQSQANLLQSQPSITLTSQPATPTRTIAATPIQTLPQSQSTPKRIDTPSLEEPSDLEELEQFAKTFKQRRIKLGFTQGDVGLAMGKLYGNDFSQTTISRFEALNLSFKNMCKLKPLLEKWLNDAENLSSDSSLSSPSALNSPGIEGLSRRRKKRTSIETNIRVALEKSFLENQKPTSEEITMIADQLNMEKEVIRVWFCNRRQKEKRINPPSSGGTSSSPIKAIFPSPTSLVATTPSLVTSSAATTLTVSPVLPLTSAAVTNLSVTGTSDTTSNNTATVISTAPPASSAVTSPSLSPSPSASASTSEASSASETSTTQTTSTPLSSPLGTSQVMVTASGLQTAAAAALQGAAQLPANASLAAMAAAAGLNPSLMAPSQFAAGGALLSLNPGTLSGALSPALMSNSTLATIQALASGGSLPITSLDATGNLVFANAGGAPNIVTAPLFLNPQNLSLLTSNPVSLVSAAAASAGNSAPVASLHATSTSAESIQNSLFTVASASGAASTTTTASKAQ.

Polar residues predominate over residues 1–11; the sequence is MNNPSETSKPS. 4 disordered regions span residues 1–34, 67–95, 258–283, and 357–381; these read MNNP…QPVP, SLNV…SVQA, ATPI…EEPS, and SSDS…RRRK. Residues 81–95 are compositionally biased toward low complexity; sequence SQQPSQPSQQPSVQA. Phosphothreonine occurs at positions 270 and 276. The region spanning 280–354 is the POU-specific domain; sequence EEPSDLEELE…LLEKWLNDAE (75 aa). Residue serine 283 is modified to Phosphoserine. The segment covering 357–371 has biased composition (low complexity); it reads SSDSSLSSPSALNSP. The homeobox DNA-binding region spans 379 to 438; sequence RRKKRTSIETNIRVALEKSFLENQKPTSEEITMIADQLNMEKEVIRVWFCNRRQKEKRIN. Serine 385 and serine 448 each carry phosphoserine. A compositionally biased stretch (polar residues) spans 494-504; that stretch reads VTGTSDTTSNN. The segment at 494–557 is disordered; it reads VTGTSDTTSN…TTSTPLSSPL (64 aa). Residues 505–557 show a composition bias toward low complexity; that stretch reads TATVISTAPPASSAVTSPSLSPSPSASASTSEASSASETSTTQTTSTPLSSPL.

The protein belongs to the POU transcription factor family. Class-2 subfamily. As to quaternary structure, interacts with POU2AF1; the interaction increases POU2F1 transactivation activity. Interacts with NR3C1, AR, PGR and HCFC1. (Microbial infection) Associates with the herpes simplex virus VP16-induced complex; binding to HCFC1 activates the viral transcriptional activator VP16 for association with POU2F1, to form a multiprotein-DNA complex responsible for activating transcription of the viral immediate early genes. In terms of assembly, (Microbial infection) Interacts with human herpesvirus 8 (KSHV) protein RTA/ORF50; this interaction enhances RTA/ORF50-mediated transactivation of several viral promoters including K-bZIP promoter. In terms of processing, phosphorylated by PRKDC. As to expression, ubiquitous. Isoform 2 is lymphocyte-specific.

The protein resides in the nucleus. Transcription factor that binds to the octamer motif (5'-ATTTGCAT-3') and activates the promoters of the genes for some small nuclear RNAs (snRNA) and of genes such as those for histone H2B and immunoglobulins. Modulates transcription transactivation by NR3C1, AR and PGR. Functionally, (Microbial infection) In case of human herpes simplex virus (HSV) infection, POU2F1 forms a multiprotein-DNA complex with the viral transactivator protein VP16 and HCFC1 thereby enabling the transcription of the viral immediate early genes. This is POU domain, class 2, transcription factor 1 (POU2F1) from Homo sapiens (Human).